Reading from the N-terminus, the 138-residue chain is Cysteine desulfuration protein SufE (138 aa).

Cys-51 functions as the Cysteine persulfide intermediate in the catalytic mechanism.

It belongs to the SufE family. Homodimer. Interacts with SufS.

The protein localises to the cytoplasm. The protein operates within cofactor biosynthesis; iron-sulfur cluster biosynthesis. Functionally, participates in cysteine desulfuration mediated by SufS. Cysteine desulfuration mobilizes sulfur from L-cysteine to yield L-alanine and constitutes an essential step in sulfur metabolism for biosynthesis of a variety of sulfur-containing biomolecules. Functions as a sulfur acceptor for SufS, by mediating the direct transfer of the sulfur atom from the S-sulfanylcysteine of SufS, an intermediate product of cysteine desulfuration process. The polypeptide is Cysteine desulfuration protein SufE (Escherichia coli O45:K1 (strain S88 / ExPEC)).